The chain runs to 573 residues: Glutathione/L-cysteine transport system ATP-binding/permease protein CydC (573 aa).

Residues 1-15 (MRALLPYLALYKRHK) are Cytoplasmic-facing. Transmembrane regions (helical) follow at residues 16–36 (WMLS…IGLL) and 37–57 (TLSG…LYSF). One can recognise an ABC transmembrane type-1 domain in the interval 20-306 (LGIVLAIVTL…VTGAFQHLGQ (287 aa)). Residues 58-136 (NYMLPAAGVR…VDTLDHLYLR (79 aa)) are Cytoplasmic-facing. The helical transmembrane segment at 137-157 (VISPLVGAFVVIMVVTIGLSF) threads the bilayer. Residues 158-161 (LDFT) lie on the Periplasmic side of the membrane. Residues 162–182 (LAFTLGGIMLLTLFLMPPLFY) form a helical membrane-spanning segment. Residues 183–249 (RAGKSTGQNL…QSELTALSQA (67 aa)) lie on the Cytoplasmic side of the membrane. A helical membrane pass occupies residues 250-270 (IMLLIGALAVILMLWMASGGV). The Periplasmic portion of the chain corresponds to 271-276 (GGNAQP). A helical membrane pass occupies residues 277-297 (GALIALFVFCALAAFEALAPV). At 298-573 (TGAFQHLGQV…GRYYQFKQGL (276 aa)) the chain is on the cytoplasmic side. The ABC transporter domain maps to 339 to 572 (LTLRDVQFTY…QGRYYQFKQG (234 aa)). ATP is bound at residue 373–380 (GRTGCGKS).

It belongs to the ABC transporter superfamily. Cysteine exporter (TC 3.A.1.129.1) family. In terms of assembly, forms a heterodimer with CydD.

The protein localises to the cell inner membrane. The enzyme catalyses L-cysteine(in) + ATP + H2O = L-cysteine(out) + ADP + phosphate + H(+). It catalyses the reaction glutathione(in) + ATP + H2O = glutathione(out) + ADP + phosphate + H(+). ATPase activity is stimulated by various thiol compounds. The presence of heme leads to a further enhancement of thiol-stimulated ATPase activity, although a large excess of heme inhibits activity. Glutathione transport is inhibited by sodium orthovanadate, an inhibitor of ABC-type transport systems, but not by the proton ionophore carbonyl cyanide m-chlorophenylhydrazone (CCCP). Its function is as follows. Part of the ABC transporter complex CydDC that exports the reduced low-molecular-weight thiols cysteine and glutathione to the periplasm. Export of these thiol-containing redox-active molecules may be crucial for redox homeostasis in the periplasm, permitting correct assembly of various respiratory complexes and formation of correct disulfide bonds in periplasmic and secreted proteins. CydC contains transmembrane domains (TMD), which form a pore in the inner membrane, and an ATP-binding domain (NBD), which is responsible for energy generation. Required for the assembly of functional cytochrome bd-type quinol oxidases and periplasmic c-type cytochromes. Overexpression of CydDC under anaerobic conditions also results in the formation of a heme biosynthesis-derived pigment, P-574. CydDC binds heme b, but heme is probably not transported by the complex and instead has a role in regulating ATPase activity. Conversely, a more recent study suggests an alternative function of CydDC: authors suggest that CydDC does not mediate the export of L-cysteine but rather reduces cytoplasmic L-cystine to L-cysteine. The principle function of CydDC would be to maintain the reduced state of cytoplasmic L-cysteine, thereby providing an important connection between sulfur metabolism, oxidative stress and resistance to antibiotics. The sequence is that of Glutathione/L-cysteine transport system ATP-binding/permease protein CydC from Escherichia coli (strain K12).